The sequence spans 63 residues: MAKDTGKTVKVRLVRGLRGTQSRHRLSVHALGLNKINDVRELKDSPQVRGLINTVHYLVKVED.

Belongs to the universal ribosomal protein uL30 family. As to quaternary structure, part of the 50S ribosomal subunit.

The sequence is that of Large ribosomal subunit protein uL30 from Xanthomonas campestris pv. campestris (strain 8004).